The chain runs to 92 residues: UPF0235 protein PF1765 (92 aa).

Belongs to the UPF0235 family.

The polypeptide is UPF0235 protein PF1765 (Pyrococcus furiosus (strain ATCC 43587 / DSM 3638 / JCM 8422 / Vc1)).